Here is a 1393-residue protein sequence, read N- to C-terminus: DNA-directed RNA polymerase subunit beta' (1393 aa).

Positions 70, 72, 85, and 88 each coordinate Zn(2+). Mg(2+)-binding residues include D461, D463, and D465. Residues C804, C877, C884, and C887 each contribute to the Zn(2+) site.

The protein belongs to the RNA polymerase beta' chain family. In terms of assembly, the RNAP catalytic core consists of 2 alpha, 1 beta, 1 beta' and 1 omega subunit. When a sigma factor is associated with the core the holoenzyme is formed, which can initiate transcription. Mg(2+) is required as a cofactor. Zn(2+) serves as cofactor.

The catalysed reaction is RNA(n) + a ribonucleoside 5'-triphosphate = RNA(n+1) + diphosphate. DNA-dependent RNA polymerase catalyzes the transcription of DNA into RNA using the four ribonucleoside triphosphates as substrates. The chain is DNA-directed RNA polymerase subunit beta' from Rhodospirillum rubrum (strain ATCC 11170 / ATH 1.1.1 / DSM 467 / LMG 4362 / NCIMB 8255 / S1).